The sequence spans 1673 residues: AF4/FMR2 family member lilli (1673 aa).

9 disordered regions span residues 1-24 (MAQQ…NNNN), 54-80 (YSQN…QQGI), 125-302 (SRSA…PPEK), 407-534 (QLPP…GAQN), 575-604 (VGTG…SNKW), 722-1086 (RLSD…INTL), 1114-1133 (QGKL…PAAP), 1141-1160 (RMTP…PART), and 1187-1315 (KLTP…MGKE). The span at 71-80 (REKIERQQGI) shows a compositional bias: basic and acidic residues. 2 stretches are compositionally biased toward low complexity: residues 146-180 (SLGH…QQQQ) and 223-244 (PRTS…SGGV). Threonine 420 bears the Phosphothreonine mark. Residues 428–441 (LKTEKNHSLEKQDS) show a composition bias toward basic and acidic residues. The span at 443–454 (LENDLELSESED) shows a compositional bias: acidic residues. Phosphoserine occurs at positions 450 and 452. The segment covering 465–486 (GNSSNSSESDSSESGSESSSKN) has biased composition (low complexity). Basic residues predominate over residues 491-500 (HPNHQQHHHQ). The span at 501 to 525 (LQQQQQQQQATMQQQQVLQQQHRSQ) shows a compositional bias: low complexity. A compositionally biased stretch (gly residues) spans 577-586 (TGSGSGGTLS). Residues 594-604 (KTPSPTESNKW) show a composition bias toward polar residues. Residues 724–757 (SDSGTSASGSSSSSSSSSDSAMGGEVVPMPGPGE) show a composition bias toward low complexity. The span at 775-788 (QPTQSQKAPPSNSV) shows a compositional bias: polar residues. Over residues 802–812 (QRQKKPRKKKA) the composition is skewed to basic residues. Phosphoserine occurs at positions 821 and 822. The segment at residues 851 to 863 (KKGRGRPRKQQQS) is a DNA-binding region (a.T hook). Positions 860–898 (QQQSGGSGNLSSASAGSSSQTKGPTLTAAKKPLAKTPLA) are enriched in low complexity. Residues serine 871 and serine 873 each carry the phosphoserine modification. Residues 909 to 919 (SQSSSNGNTPT) show a composition bias toward polar residues. Composition is skewed to low complexity over residues 949–965 (SSSA…SSSS) and 993–1004 (GSGSSSPSSSGS). A compositionally biased stretch (polar residues) spans 1011-1022 (TRSQVGSGQALA). The span at 1034–1060 (SQHSQHLSSSDCSSSSGGCTAVCSSSS) shows a compositional bias: low complexity. The span at 1065–1082 (EGRREKERERKPKSDKNK) shows a compositional bias: basic and acidic residues. A compositionally biased stretch (polar residues) spans 1190-1205 (PAQQNGHLTPKDQATN). Composition is skewed to basic and acidic residues over residues 1226 to 1243 (EHPV…EAKF) and 1252 to 1282 (FQLK…EQPP). Serine 1362 is subject to Phosphoserine. Threonine 1364 is modified (phosphothreonine). Residues 1564–1583 (NTPSSISPSNSVGSQGSGSN) are compositionally biased toward low complexity. The disordered stretch occupies residues 1564–1588 (NTPSSISPSNSVGSQGSGSNTPPGR).

The protein belongs to the AF4 family. In terms of assembly, component of the super elongation complex (SEC), at least composed of Ell, Cdk9, cyclin-T (CycT), lilli and ear.

The protein resides in the nucleus. Functionally, has a role in transcriptional regulation. Acts in parallel with the Ras/MAPK and the PI3K/PKB pathways in the control of cell identity and cellular growth. Essential for regulation of the cytoskeleton and cell growth but not for cell proliferation or growth rate. Required specifically for the microtubule-based basal transport of lipid droplets. Plays a partially redundant function downstream of Raf in cell fate specification in the developing eye. Pair-rule protein that regulates embryonic cellularization, gastrulation and segmentation. The chain is AF4/FMR2 family member lilli from Drosophila melanogaster (Fruit fly).